The chain runs to 194 residues: Large ribosomal subunit protein eL15 (194 aa).

A disordered region spans residues 164-194 (SAGKKGRGLRNKGKGAEKVRPSVRANKGKTK). A compositionally biased stretch (basic residues) spans 167–176 (KKGRGLRNKG).

The protein belongs to the eukaryotic ribosomal protein eL15 family.

In Thermococcus gammatolerans (strain DSM 15229 / JCM 11827 / EJ3), this protein is Large ribosomal subunit protein eL15.